Here is a 72-residue protein sequence, read N- to C-terminus: Translation initiation factor IF-1 (72 aa).

In terms of domain architecture, S1-like spans 1–72 (MSKDDSIEFE…TKGRITYRMK (72 aa)).

It belongs to the IF-1 family. In terms of assembly, component of the 30S ribosomal translation pre-initiation complex which assembles on the 30S ribosome in the order IF-2 and IF-3, IF-1 and N-formylmethionyl-tRNA(fMet); mRNA recruitment can occur at any time during PIC assembly.

Its subcellular location is the cytoplasm. In terms of biological role, one of the essential components for the initiation of protein synthesis. Stabilizes the binding of IF-2 and IF-3 on the 30S subunit to which N-formylmethionyl-tRNA(fMet) subsequently binds. Helps modulate mRNA selection, yielding the 30S pre-initiation complex (PIC). Upon addition of the 50S ribosomal subunit IF-1, IF-2 and IF-3 are released leaving the mature 70S translation initiation complex. This chain is Translation initiation factor IF-1, found in Xanthomonas campestris pv. campestris (strain 8004).